Here is a 51-residue protein sequence, read N- to C-terminus: Sperm protamine P1 (51 aa).

Belongs to the protamine P1 family. Cross-linked by interchain disulfide bonds around the DNA-helix. Testis.

The protein resides in the nucleus. The protein localises to the chromosome. Its function is as follows. Protamines substitute for histones in the chromatin of sperm during the haploid phase of spermatogenesis. They compact sperm DNA into a highly condensed, stable and inactive complex. The chain is Sperm protamine P1 (PRM1) from Pongo pygmaeus (Bornean orangutan).